A 566-amino-acid polypeptide reads, in one-letter code: Oxygen-dependent choline dehydrogenase (566 aa).

7-36 (DYIICGAGSAGNVLATRLTEDPNVTVLLLE) serves as a coordination point for FAD. Residues 182–204 (YQQEGFGPMDRTVTPKGRRASTA) form a disordered region. The active-site Proton acceptor is the His-474.

The protein belongs to the GMC oxidoreductase family. The cofactor is FAD.

The enzyme catalyses choline + A = betaine aldehyde + AH2. It carries out the reaction betaine aldehyde + NAD(+) + H2O = glycine betaine + NADH + 2 H(+). Its pathway is amine and polyamine biosynthesis; betaine biosynthesis via choline pathway; betaine aldehyde from choline (cytochrome c reductase route): step 1/1. In terms of biological role, involved in the biosynthesis of the osmoprotectant glycine betaine. Catalyzes the oxidation of choline to betaine aldehyde and betaine aldehyde to glycine betaine at the same rate. The polypeptide is Oxygen-dependent choline dehydrogenase (Burkholderia multivorans (strain ATCC 17616 / 249)).